The sequence spans 120 residues: Holo-[acyl-carrier-protein] synthase (120 aa).

Positions 8 and 58 each coordinate Mg(2+).

The protein belongs to the P-Pant transferase superfamily. AcpS family. Mg(2+) is required as a cofactor.

The protein resides in the cytoplasm. It carries out the reaction apo-[ACP] + CoA = holo-[ACP] + adenosine 3',5'-bisphosphate + H(+). Functionally, transfers the 4'-phosphopantetheine moiety from coenzyme A to a Ser of acyl-carrier-protein. This is Holo-[acyl-carrier-protein] synthase from Streptococcus sanguinis (strain SK36).